The following is a 347-amino-acid chain: MLVLGIESSCDETAAAVVNDRREILGEVVLSQLDEHRPFGGVVPEIAARSHLAHMDKLVAEAMRRAGVGFADLDAVAATGGPGLIGGVIVGVMTGKAIALAAGKPFLAVNHLEGHALTPRLTHDIAFPYLLLLASGGHCQLLAVEGVGRYTRLGTTIDDAAGEAFDKVAKMAGLGYPGGPAVEAAAQGGDPARFTLPRPMKGKPGCDFSFSGLKNAARLLIESLPQPLSAADQADVARAFQDAVADAMADRVRRGVREMKSRWPQTQHLVVAGGVAANTALRQVLVRIGNETGLEFLAPPLKLCTDNAAMIAWAGLERLRLGQSDDLTFAPRPRWPLDPTARKGAKA.

The Fe cation site is built by His-111 and His-115. Residues 133–137 (LASGG), Asp-166, Gly-179, and Asn-278 contribute to the substrate site. A Fe cation-binding site is contributed by Asp-306.

It belongs to the KAE1 / TsaD family. It depends on Fe(2+) as a cofactor.

The protein resides in the cytoplasm. The catalysed reaction is L-threonylcarbamoyladenylate + adenosine(37) in tRNA = N(6)-L-threonylcarbamoyladenosine(37) in tRNA + AMP + H(+). In terms of biological role, required for the formation of a threonylcarbamoyl group on adenosine at position 37 (t(6)A37) in tRNAs that read codons beginning with adenine. Is involved in the transfer of the threonylcarbamoyl moiety of threonylcarbamoyl-AMP (TC-AMP) to the N6 group of A37, together with TsaE and TsaB. TsaD likely plays a direct catalytic role in this reaction. This Paramagnetospirillum magneticum (strain ATCC 700264 / AMB-1) (Magnetospirillum magneticum) protein is tRNA N6-adenosine threonylcarbamoyltransferase.